The chain runs to 143 residues: Large ribosomal subunit protein uL11 (143 aa).

The protein belongs to the universal ribosomal protein uL11 family. As to quaternary structure, part of the ribosomal stalk of the 50S ribosomal subunit. Interacts with L10 and the large rRNA to form the base of the stalk. L10 forms an elongated spine to which L12 dimers bind in a sequential fashion forming a multimeric L10(L12)X complex. Post-translationally, one or more lysine residues are methylated.

In terms of biological role, forms part of the ribosomal stalk which helps the ribosome interact with GTP-bound translation factors. The polypeptide is Large ribosomal subunit protein uL11 (Bordetella parapertussis (strain 12822 / ATCC BAA-587 / NCTC 13253)).